A 160-amino-acid polypeptide reads, in one-letter code: Ribonuclease ARB_07070 (160 aa).

The N-terminal stretch at 1–18 (MVSFKAILTLSLIGAAFA) is a signal peptide. The disordered stretch occupies residues 26-51 (AEPVEDSGAVANSPEGSGMDLGGTDP). Catalysis depends on Glu-103, which acts as the Proton acceptor. His-144 acts as the Proton donor in catalysis.

It belongs to the ribonuclease U2 family.

Its subcellular location is the secreted. In terms of biological role, this purine-specific ribonuclease cleaves 28S RNA in eukaryotic ribosomes, inhibits protein synthesis, and shows antitumor activity. This Arthroderma benhamiae (strain ATCC MYA-4681 / CBS 112371) (Trichophyton mentagrophytes) protein is Ribonuclease ARB_07070.